Reading from the N-terminus, the 399-residue chain is Succinate--CoA ligase [ADP-forming] subunit beta (399 aa).

The region spanning 9–254 (KELLAKFGVA…ETEEDPAEIE (246 aa)) is the ATP-grasp domain. ATP contacts are provided by residues K46, 53 to 55 (GRG), A112, and E117. Mg(2+)-binding residues include N209 and D223. Substrate-binding positions include N274 and 331-333 (GIM).

Belongs to the succinate/malate CoA ligase beta subunit family. As to quaternary structure, heterotetramer of two alpha and two beta subunits. Mg(2+) is required as a cofactor.

The enzyme catalyses succinate + ATP + CoA = succinyl-CoA + ADP + phosphate. It carries out the reaction GTP + succinate + CoA = succinyl-CoA + GDP + phosphate. It participates in carbohydrate metabolism; tricarboxylic acid cycle; succinate from succinyl-CoA (ligase route): step 1/1. Succinyl-CoA synthetase functions in the citric acid cycle (TCA), coupling the hydrolysis of succinyl-CoA to the synthesis of either ATP or GTP and thus represents the only step of substrate-level phosphorylation in the TCA. The beta subunit provides nucleotide specificity of the enzyme and binds the substrate succinate, while the binding sites for coenzyme A and phosphate are found in the alpha subunit. The chain is Succinate--CoA ligase [ADP-forming] subunit beta from Rhizorhabdus wittichii (strain DSM 6014 / CCUG 31198 / JCM 15750 / NBRC 105917 / EY 4224 / RW1) (Sphingomonas wittichii).